The primary structure comprises 474 residues: Protein anachronism (474 aa).

The N-terminal stretch at 1–33 (MASAMRGEKCERSRIRELVLILSLITMAGDSRA) is a signal peptide. Residues asparagine 54, asparagine 62, asparagine 73, asparagine 116, and asparagine 144 are each glycosylated (N-linked (GlcNAc...) asparagine). A disordered region spans residues 173-195 (NPGQTREHNPGQASTQPISTENP). Residues 183 to 195 (GQASTQPISTENP) show a composition bias toward polar residues. N-linked (GlcNAc...) asparagine glycosylation is present at asparagine 342. Residues 359 to 372 (FIESTTSNSPTIDN) show a composition bias toward polar residues. A disordered region spans residues 359–474 (FIESTTSNSP…HHRIPAHKQE (116 aa)). Basic residues-rich tracts occupy residues 390-400 (LVHHRRHHHNH) and 437-474 (NHHR…HKQE).

As to expression, synthesized in some glial cells and secreted.

The protein resides in the secreted. In terms of biological role, negatively regulates proliferation of neuronal precursor cells, thereby controlling the timing of postembryonic neurogenesis. This chain is Protein anachronism (ana), found in Drosophila melanogaster (Fruit fly).